A 339-amino-acid chain; its full sequence is Pyrimidine monooxygenase RutA (339 aa).

FMN contacts are provided by residues 26–27 (IK), asparagine 92, glutamate 101, 117–118 (RY), and serine 167.

It belongs to the NtaA/SnaA/DszA monooxygenase family. RutA subfamily.

The enzyme catalyses uracil + FMNH2 + NADH + O2 = (Z)-3-ureidoacrylate + FMN + NAD(+) + H2O + H(+). It catalyses the reaction thymine + FMNH2 + NADH + O2 = (Z)-2-methylureidoacrylate + FMN + NAD(+) + H2O + H(+). Catalyzes the pyrimidine ring opening between N-3 and C-4 by an unusual flavin hydroperoxide-catalyzed mechanism, adding oxygen atoms in the process to yield ureidoacrylate peracid, that immediately reacts with FMN forming ureidoacrylate and FMN-N(5)-oxide. The FMN-N(5)-oxide reacts spontaneously with NADH to produce FMN. Requires the flavin reductase RutF to regenerate FMN in vivo. The protein is Pyrimidine monooxygenase RutA of Cronobacter sakazakii (strain ATCC BAA-894) (Enterobacter sakazakii).